Consider the following 478-residue polypeptide: Chromosomal replication initiator protein DnaA (478 aa).

A domain I, interacts with DnaA modulators region spans residues 1–71 (MKEFWQTCVS…EALAAEWFQR (71 aa)). The segment at 71-140 (RPVQVAFELP…DAAGVVYERS (70 aa)) is domain II. The segment at 141-357 (RLNTDLTFDN…GALRKVLAYA (217 aa)) is domain III, AAA+ region. ATP-binding residues include glycine 185, glycine 187, lysine 188, and threonine 189. The domain IV, binds dsDNA stretch occupies residues 358–478 (RFHGRDVLSV…LHVLEQTLKG (121 aa)).

The protein belongs to the DnaA family. As to quaternary structure, oligomerizes as a right-handed, spiral filament on DNA at oriC.

The protein localises to the cytoplasm. Functionally, plays an essential role in the initiation and regulation of chromosomal replication. ATP-DnaA binds to the origin of replication (oriC) to initiate formation of the DNA replication initiation complex once per cell cycle. Binds the DnaA box (a 9 base pair repeat at the origin) and separates the double-stranded (ds)DNA. Forms a right-handed helical filament on oriC DNA; dsDNA binds to the exterior of the filament while single-stranded (ss)DNA is stabiized in the filament's interior. The ATP-DnaA-oriC complex binds and stabilizes one strand of the AT-rich DNA unwinding element (DUE), permitting loading of DNA polymerase. After initiation quickly degrades to an ADP-DnaA complex that is not apt for DNA replication. Binds acidic phospholipids. The polypeptide is Chromosomal replication initiator protein DnaA (Bordetella petrii (strain ATCC BAA-461 / DSM 12804 / CCUG 43448)).